The primary structure comprises 400 residues: Elongation factor Tu (400 aa).

The tr-type G domain occupies 10–208 (KPHMNVGTIG…AMDSYFPDPV (199 aa)). The segment at 19 to 26 (GHIDHGKT) is G1. 19 to 26 (GHIDHGKT) is a GTP binding site. Thr-26 contributes to the Mg(2+) binding site. Residues 60-64 (GITIN) form a G2 region. Residues 81–84 (DCPG) are G3. GTP-binding positions include 81–85 (DCPGH) and 136–139 (NKVD). Residues 136-139 (NKVD) form a G4 region. Positions 174–176 (SAL) are G5.

The protein belongs to the TRAFAC class translation factor GTPase superfamily. Classic translation factor GTPase family. EF-Tu/EF-1A subfamily. In terms of assembly, monomer.

The protein resides in the cytoplasm. The catalysed reaction is GTP + H2O = GDP + phosphate + H(+). Its function is as follows. GTP hydrolase that promotes the GTP-dependent binding of aminoacyl-tRNA to the A-site of ribosomes during protein biosynthesis. In Fervidobacterium nodosum (strain ATCC 35602 / DSM 5306 / Rt17-B1), this protein is Elongation factor Tu.